Here is a 221-residue protein sequence, read N- to C-terminus: MKKAVCIMSGGMDSTLCAVMAKRAGYDVVALHFDYNQRTMKREKRAFDEICERLGVVKKINLDVSFIAQIGGNALTDTSMQIRKDGVSNDVPNTYVPFRNGVFISIAAALAEKEGAQAIYIGVVEEDSSGYPDCKESFIKSINEAINLGTSADFSCEIITPLVNLSKADIVSKSLELNSPIELTWSCYESEDEACGLCDSCRLRLNGFKKANAVDKIPYKK.

8–18 (MSGGMDSTLCA) contributes to the ATP binding site. Cys-187, Cys-195, Cys-198, and Cys-201 together coordinate Zn(2+).

The protein belongs to the QueC family. Requires Zn(2+) as cofactor.

It catalyses the reaction 7-carboxy-7-deazaguanine + NH4(+) + ATP = 7-cyano-7-deazaguanine + ADP + phosphate + H2O + H(+). The protein operates within purine metabolism; 7-cyano-7-deazaguanine biosynthesis. Functionally, catalyzes the ATP-dependent conversion of 7-carboxy-7-deazaguanine (CDG) to 7-cyano-7-deazaguanine (preQ(0)). The sequence is that of 7-cyano-7-deazaguanine synthase from Campylobacter concisus (strain 13826).